The primary structure comprises 278 residues: Dermonecrotic toxin LspiSicTox-betaIE2ii (278 aa).

The active site involves H5. Mg(2+)-binding residues include E25 and D27. Residue H41 is the Nucleophile of the active site. Disulfide bonds link C45-C51 and C47-C190. Mg(2+) is bound at residue D85.

Belongs to the arthropod phospholipase D family. Class II subfamily. The cofactor is Mg(2+). In terms of tissue distribution, expressed by the venom gland.

The protein localises to the secreted. The enzyme catalyses an N-(acyl)-sphingosylphosphocholine = an N-(acyl)-sphingosyl-1,3-cyclic phosphate + choline. The catalysed reaction is an N-(acyl)-sphingosylphosphoethanolamine = an N-(acyl)-sphingosyl-1,3-cyclic phosphate + ethanolamine. It carries out the reaction a 1-acyl-sn-glycero-3-phosphocholine = a 1-acyl-sn-glycero-2,3-cyclic phosphate + choline. It catalyses the reaction a 1-acyl-sn-glycero-3-phosphoethanolamine = a 1-acyl-sn-glycero-2,3-cyclic phosphate + ethanolamine. Functionally, dermonecrotic toxins cleave the phosphodiester linkage between the phosphate and headgroup of certain phospholipids (sphingolipid and lysolipid substrates), forming an alcohol (often choline) and a cyclic phosphate. This toxin acts on sphingomyelin (SM). It may also act on ceramide phosphoethanolamine (CPE), lysophosphatidylcholine (LPC) and lysophosphatidylethanolamine (LPE), but not on lysophosphatidylserine (LPS), and lysophosphatidylglycerol (LPG). It acts by transphosphatidylation, releasing exclusively cyclic phosphate products as second products. Induces dermonecrosis, hemolysis, increased vascular permeability, edema, inflammatory response, and platelet aggregation. The chain is Dermonecrotic toxin LspiSicTox-betaIE2ii from Loxosceles spinulosa (Recluse spider).